Reading from the N-terminus, the 300-residue chain is Glutamyl-Q tRNA(Asp) synthetase (300 aa).

L-glutamate contacts are provided by residues 14–18 and glutamate 50; that span reads RFAPT. The 'HIGH' region motif lies at 17–27; that stretch reads PTPSGFLHFGS. Zn(2+) is bound by residues cysteine 106, cysteine 108, tyrosine 120, and cysteine 124. Positions 177 and 195 each coordinate L-glutamate. The 'KMSKS' region motif lies at 233–237; sequence KLGKS. Residue lysine 236 participates in ATP binding.

Belongs to the class-I aminoacyl-tRNA synthetase family. GluQ subfamily. Requires Zn(2+) as cofactor.

Functionally, catalyzes the tRNA-independent activation of glutamate in presence of ATP and the subsequent transfer of glutamate onto a tRNA(Asp). Glutamate is transferred on the 2-amino-5-(4,5-dihydroxy-2-cyclopenten-1-yl) moiety of the queuosine in the wobble position of the QUC anticodon. In Pseudomonas putida (strain ATCC 700007 / DSM 6899 / JCM 31910 / BCRC 17059 / LMG 24140 / F1), this protein is Glutamyl-Q tRNA(Asp) synthetase.